Here is a 137-residue protein sequence, read N- to C-terminus: Peptide methionine sulfoxide reductase MsrB (137 aa).

Residues 7–129 (AEELKKKLSE…NSASLAFSDE (123 aa)) form the MsrB domain. Zn(2+) is bound by residues Cys46, Cys49, Cys95, and Cys98. The active-site Nucleophile is the Cys118.

The protein belongs to the MsrB Met sulfoxide reductase family. Requires Zn(2+) as cofactor.

The catalysed reaction is L-methionyl-[protein] + [thioredoxin]-disulfide + H2O = L-methionyl-(R)-S-oxide-[protein] + [thioredoxin]-dithiol. The chain is Peptide methionine sulfoxide reductase MsrB from Salmonella arizonae (strain ATCC BAA-731 / CDC346-86 / RSK2980).